A 78-amino-acid polypeptide reads, in one-letter code: Acyl carrier protein (78 aa).

One can recognise a Carrier domain in the interval 2 to 77 (SDTAERIKKI…DAVSYIDEHK (76 aa)). Serine 37 carries the O-(pantetheine 4'-phosphoryl)serine modification.

This sequence belongs to the acyl carrier protein (ACP) family. 4'-phosphopantetheine is transferred from CoA to a specific serine of apo-ACP by AcpS. This modification is essential for activity because fatty acids are bound in thioester linkage to the sulfhydryl of the prosthetic group.

The protein resides in the cytoplasm. It functions in the pathway lipid metabolism; fatty acid biosynthesis. Carrier of the growing fatty acid chain in fatty acid biosynthesis. The protein is Acyl carrier protein of Zymomonas mobilis subsp. mobilis (strain ATCC 31821 / ZM4 / CP4).